The chain runs to 225 residues: Cytidylate kinase (225 aa).

11–19 is a binding site for ATP; it reads GPAAAGKST.

It belongs to the cytidylate kinase family. Type 1 subfamily.

Its subcellular location is the cytoplasm. The catalysed reaction is CMP + ATP = CDP + ADP. It carries out the reaction dCMP + ATP = dCDP + ADP. This Bacillus cereus (strain AH187) protein is Cytidylate kinase.